The sequence spans 480 residues: tRNA-2-methylthio-N(6)-dimethylallyladenosine synthase (480 aa).

In terms of domain architecture, MTTase N-terminal spans 31–151 (RGLHVITWGC…LPEMVARAAR (121 aa)). The [4Fe-4S] cluster site is built by Cys40, Cys76, Cys114, Cys192, Cys196, and Cys199. In terms of domain architecture, Radical SAM core spans 178–410 (SPGGITSFLT…QALLRTQQDA (233 aa)). A TRAM domain is found at 413 to 475 (DGTVGHVVPV…TNSLSGTLVQ (63 aa)).

This sequence belongs to the methylthiotransferase family. MiaB subfamily. In terms of assembly, monomer. Requires [4Fe-4S] cluster as cofactor.

It localises to the cytoplasm. It catalyses the reaction N(6)-dimethylallyladenosine(37) in tRNA + (sulfur carrier)-SH + AH2 + 2 S-adenosyl-L-methionine = 2-methylsulfanyl-N(6)-dimethylallyladenosine(37) in tRNA + (sulfur carrier)-H + 5'-deoxyadenosine + L-methionine + A + S-adenosyl-L-homocysteine + 2 H(+). Catalyzes the methylthiolation of N6-(dimethylallyl)adenosine (i(6)A), leading to the formation of 2-methylthio-N6-(dimethylallyl)adenosine (ms(2)i(6)A) at position 37 in tRNAs that read codons beginning with uridine. In Gluconacetobacter diazotrophicus (strain ATCC 49037 / DSM 5601 / CCUG 37298 / CIP 103539 / LMG 7603 / PAl5), this protein is tRNA-2-methylthio-N(6)-dimethylallyladenosine synthase.